Consider the following 110-residue polypeptide: UPF0132 membrane protein MJ1443 (110 aa).

A run of 3 helical transmembrane segments spans residues I15–E35, I49–W69, and M70–A90.

It belongs to the UPF0132 family.

Its subcellular location is the cell membrane. This is UPF0132 membrane protein MJ1443 from Methanocaldococcus jannaschii (strain ATCC 43067 / DSM 2661 / JAL-1 / JCM 10045 / NBRC 100440) (Methanococcus jannaschii).